Here is a 446-residue protein sequence, read N- to C-terminus: Acyl-lipid (8-3)-desaturase (446 aa).

The region spanning 6 to 82 (GKTFTWEELA…MKKYYVGTLV (77 aa)) is the Cytochrome b5 heme-binding domain. H41 and H64 together coordinate heme. The next 2 membrane-spanning stretches (helical) occupy residues 125–145 (ALIFGSLIASYYAQLFVPFVV) and 150–170 (LQVVFAIIMGFACAQVGLNPL). The Histidine box-1 motif lies at 171 to 175 (HDASH). Positions 207–212 (HMLGHH) match the Histidine box-2 motif. A Histidine box-3 motif is present at residues 387-391 (QAVHH).

Belongs to the fatty acid desaturase type 1 family. Fe(2+) is required as a cofactor.

Its subcellular location is the membrane. The catalysed reaction is an (8Z,11Z,14Z)-icosatrienoyl-containing glycerolipid + 2 Fe(II)-[cytochrome b5] + O2 + 2 H(+) = (5Z,8Z,11Z,14Z)-eicosatetraenoyl-containing glycerolipid + 2 Fe(III)-[cytochrome b5] + 2 H2O. The enzyme catalyses an (8Z,11Z,14Z,17Z)-eicosatetraenoyl-containing glycerolipid + 2 Fe(II)-[cytochrome b5] + O2 + 2 H(+) = a (5Z,8Z,11Z,14Z,17Z)-eicosapentaenoyl-containing glycerolipid + 2 Fe(III)-[cytochrome b5] + 2 H2O. Its function is as follows. Fatty acid desaturase that introduces a cis double bond at the 5-position in 20-carbon polyunsaturated fatty acids incorporated in a glycerolipid that contain a Delta(8) double bond. Involved in the conversion of di-homo-Delta-linolenic acid to arachidonic acid. Essential in the production of eicosanoids. This is Acyl-lipid (8-3)-desaturase (DES1) from Mortierella alpina (Oleaginous fungus).